The chain runs to 579 residues: MEESHFNSNPYFWPSIPTVSGQIENTMFINKMKDQLLPEKGCGLAPPHYPTLLTVPASVSLSSGISMDTESKSEQLTPHSQASVTQNITVVPVPSTGLMTAGVSCSQRWRREGSQSRGPGLVITSPSGSLVTTASSAQTFPISTPMIVSALPPGSQALQVVPDLSKKVASTLTEEGGGGGGGGGTVAPPKPPRGRKKKRMLESGLPEMNDPYVLAPGDDDDHQKDGKTYRCRMCSLTFYSKSEMQIHSKSHTETKPHKCPHCSKTFANSSYLAQHIRIHSGAKPYSCNFCEKSFRQLSHLQQHTRIHSKMHTETIKPHKCPHCSKTFANTSYLAQHLRIHSGAKPYNCSYCQKAFRQLSHLQQHTRIHTGDRPYKCAHPGCEKAFTQLSNLQSHRRQHNKDKPFKCHNCHRAYTDAASLEAHLSTHTVKHAKVYTCTICSRAYTSETYLMKHMRKHNPPDLQQQVQAAAAAAAVAQAQAQAQAQAQAQAQAQAQAQAQAQAQASQASQQQQQQQPPPPQPPHFQSPGAAPQGGGGGDSNQNPPPQCSFDLTPYKPAEHHKDICLTVTTSTIQVEHLASS.

The tract at residues 171–198 is disordered; that stretch reads TLTEEGGGGGGGGGTVAPPKPPRGRKKK. Positions 175 to 185 are enriched in gly residues; that stretch reads EGGGGGGGGGT. 8 consecutive C2H2-type zinc fingers follow at residues 229–251, 257–279, 285–307, 318–340, 346–368, 374–398, 404–426, and 434–456; these read YRCRMCSLTFYSKSEMQIHSKSH, HKCPHCSKTFANSSYLAQHIRIH, YSCNFCEKSFRQLSHLQQHTRIH, HKCPHCSKTFANTSYLAQHLRIH, YNCSYCQKAFRQLSHLQQHTRIH, YKCAHPGCEKAFTQLSNLQSHRRQH, FKCHNCHRAYTDAASLEAHLSTH, and YTCTICSRAYTSETYLMKHMRKH. Residues 500–513 show a composition bias toward low complexity; the sequence is QAQASQASQQQQQQ. A disordered region spans residues 500–553; it reads QAQASQASQQQQQQQPPPPQPPHFQSPGAAPQGGGGGDSNQNPPPQCSFDLTPY. Pro residues predominate over residues 514-523; sequence QPPPPQPPHF.

It belongs to the krueppel C2H2-type zinc-finger protein family. As to quaternary structure, interacts with BCAR1. As to expression, expressed in osteocytes, osteoblasts, and chondrocytes in bone.

It localises to the nucleus. In terms of biological role, transcription factor that binds the consensus DNA sequence [GC]AAAAA. Seems to bind and regulate the promoters of MMP1, MMP3, MMP7 and COL1A1. The chain is Zinc finger protein 384 (Znf384) from Rattus norvegicus (Rat).